A 181-amino-acid chain; its full sequence is Peptidyl-tRNA hydrolase 2, mitochondrial (181 aa).

The helical transmembrane segment at 10–32 (YLVHPGTLSLAAGVACGMCLGWG) threads the bilayer. Glycyl lysine isopeptide (Lys-Gly) (interchain with G-Cter in ubiquitin) cross-links involve residues lysine 78, lysine 83, lysine 97, lysine 108, lysine 117, and lysine 179.

The protein belongs to the PTH2 family. As to quaternary structure, monomer. Ubiquitinated by PRKN during mitophagy, leading to its degradation and enhancement of mitophagy. Deubiquitinated by USP30.

The protein resides in the mitochondrion outer membrane. The catalysed reaction is an N-acyl-L-alpha-aminoacyl-tRNA + H2O = an N-acyl-L-amino acid + a tRNA + H(+). Functionally, peptidyl-tRNA hydrolase which releases tRNAs from the ribosome during protein synthesis. Promotes caspase-independent apoptosis by regulating the function of two transcriptional regulators, AES and TLE1. The polypeptide is Peptidyl-tRNA hydrolase 2, mitochondrial (Ptrh2) (Mus musculus (Mouse)).